Here is a 349-residue protein sequence, read N- to C-terminus: MASIDSLQFHSLCNLQSSIGRAKLQNPSSLVIFRRRPVNLNWVQFETKGSFVCKAIGDSSTPDEDIQNTQSDDNVVVVTATTQSDIPHDSEYSISRFRSMVTTLPPVVFLMKKCSVNSIWIGVCITATVLVAAIRAYVVRKSRDNQRAGSVADLVRRGQLRSGDRRGISKSLNYEDPFNNPFVKLDKGSSTVEMCGKVYRLAPVTLTEKEQTIHQKRRSRAYQWKRPTIFLKEGDSIPPDVDPDTVRWIPANHPFATTVSDIDQDLAQNNVYQKQGVPFRIRAEHEAMQKKLEALQNEEKLNNLSIDSQNARDFQRPYKFSAKLEGENIQKNSQENHTGNSSSEETHKS.

The transit peptide at 1–52 (MASIDSLQFHSLCNLQSSIGRAKLQNPSSLVIFRRRPVNLNWVQFETKGSFV) directs the protein to the chloroplast. The Chloroplast intermembrane segment spans residues 53-116 (CKAIGDSSTP…VVFLMKKCSV (64 aa)). Residues 117–139 (NSIWIGVCITATVLVAAIRAYVV) traverse the membrane as a helical segment. At 140–349 (RKSRDNQRAG…NSSSEETHKS (210 aa)) the chain is on the stromal side. The segment at 315–349 (QRPYKFSAKLEGENIQKNSQENHTGNSSSEETHKS) is disordered. Residues 329–343 (IQKNSQENHTGNSSS) show a composition bias toward polar residues.

In terms of assembly, interacts with MIND1. Interacts with ARC6 in the chloroplast stroma and binds to FtsZ2-1 in an ARC6-dependent manner.

Its subcellular location is the plastid. It localises to the chloroplast inner membrane. Functionally, required for chloroplast division. Together with MIND1 and ARC3, regulates FtsZ ring positioning in chloroplasts in an ARC6-dependent manner. Determines the site of chloroplast division in concert with MIND1. Not directly involved in ring formation, but required for MIND1 and MINE1 localization to regulate FtsZ ring formation during plastidial constriction. The sequence is that of Protein MULTIPLE CHLOROPLAST DIVISION SITE 1 from Arabidopsis thaliana (Mouse-ear cress).